The chain runs to 385 residues: ATP phosphoribosyltransferase regulatory subunit (385 aa).

It belongs to the class-II aminoacyl-tRNA synthetase family. HisZ subfamily. In terms of assembly, heteromultimer composed of HisG and HisZ subunits.

It is found in the cytoplasm. The protein operates within amino-acid biosynthesis; L-histidine biosynthesis; L-histidine from 5-phospho-alpha-D-ribose 1-diphosphate: step 1/9. Its function is as follows. Required for the first step of histidine biosynthesis. May allow the feedback regulation of ATP phosphoribosyltransferase activity by histidine. This Bordetella pertussis (strain Tohama I / ATCC BAA-589 / NCTC 13251) protein is ATP phosphoribosyltransferase regulatory subunit.